The sequence spans 211 residues: Small ribosomal subunit protein uS3 (211 aa).

The region spanning Val39–Lys107 is the KH type-2 domain.

Belongs to the universal ribosomal protein uS3 family. Part of the 30S ribosomal subunit. Forms a tight complex with proteins S10 and S14.

In terms of biological role, binds the lower part of the 30S subunit head. Binds mRNA in the 70S ribosome, positioning it for translation. This Neorickettsia sennetsu (strain ATCC VR-367 / Miyayama) (Ehrlichia sennetsu) protein is Small ribosomal subunit protein uS3.